The primary structure comprises 360 residues: Phospho-N-acetylmuramoyl-pentapeptide-transferase (360 aa).

Transmembrane regions (helical) follow at residues 21–41, 73–93, 94–114, 132–152, 168–188, 199–219, 239–259, 263–283, 288–308, and 338–358; these read YLSFRAIVSILTALGISLWMG, TMGGVMILAAITITVLLWADL, TNPYVWAVLAVLLGYGAVGFV, WKYFWQSAIALVVAFALYAHG, VMPQLGLMYIVLTYFVIVGTS, GLAIMPTVLVAAGFAAIAWAT, LVVVCTAMVGAGLGFLWFNTY, VFMGDVGALALGGALGTIAVL, FVLVIMGGVFVMETLSVILQV, and VIVRFWIISIVLVLIGLATLK.

This sequence belongs to the glycosyltransferase 4 family. MraY subfamily. It depends on Mg(2+) as a cofactor.

The protein localises to the cell inner membrane. The enzyme catalyses UDP-N-acetyl-alpha-D-muramoyl-L-alanyl-gamma-D-glutamyl-meso-2,6-diaminopimeloyl-D-alanyl-D-alanine + di-trans,octa-cis-undecaprenyl phosphate = di-trans,octa-cis-undecaprenyl diphospho-N-acetyl-alpha-D-muramoyl-L-alanyl-D-glutamyl-meso-2,6-diaminopimeloyl-D-alanyl-D-alanine + UMP. The protein operates within cell wall biogenesis; peptidoglycan biosynthesis. Functionally, catalyzes the initial step of the lipid cycle reactions in the biosynthesis of the cell wall peptidoglycan: transfers peptidoglycan precursor phospho-MurNAc-pentapeptide from UDP-MurNAc-pentapeptide onto the lipid carrier undecaprenyl phosphate, yielding undecaprenyl-pyrophosphoryl-MurNAc-pentapeptide, known as lipid I. The chain is Phospho-N-acetylmuramoyl-pentapeptide-transferase from Vibrio cholerae serotype O1 (strain M66-2).